The chain runs to 587 residues: MTSSIECKNFLRSLQLLNLLIKIGVQNLIVCPGSRSAPLAIAAGELNKLGLVNIFNSIDERSAGFHSLGISAASGNLSLVITTSGTAVSNLLPAAVEADRSCKGIIFLTADRPLRLKDCGANQTVNQEDFLSSVCRRVLSTNLNGLHETQENEILNLVQITEKQISTFPGPIHLNIPIDKPLGISFLNKKNVLEVFERIYLKKKYVFQEVEIKSNKNKFLEILENLNLDESGIILVGPYQGSINELSSFNKSLEKLQAITGWPVFADPVSCVYSDLRGLVVNWELVLRKNKNLINCHQLLRLGPMSSSIDLEDFLTTFEGIQILIKEKNYRKLDPIKKSFEYDFGLLNFITLLLAELSINKINTKSLTPLAIDLMEEGEQIKKILKEKITNDNQITEYKLANLVPKLWPAENPIMLSASSPIRDWLTFSENGTLTRNCFSFRGASGIDGTLSLALGISRIKNPLLLVTGDLAFVHDLNGWLIENSIDLNLTILLINNNGGNIFNRLYKDNLKEDELKKLFLMPKEINWKKLAEGYQVNFKSVTNFKKLREAFEWSISIRESVIIKVDIDPENEISDKNALLEKIIGS.

It belongs to the TPP enzyme family. MenD subfamily. As to quaternary structure, homodimer. Mg(2+) is required as a cofactor. The cofactor is Mn(2+). Thiamine diphosphate serves as cofactor.

It catalyses the reaction isochorismate + 2-oxoglutarate + H(+) = 5-enolpyruvoyl-6-hydroxy-2-succinyl-cyclohex-3-ene-1-carboxylate + CO2. It participates in quinol/quinone metabolism; 1,4-dihydroxy-2-naphthoate biosynthesis; 1,4-dihydroxy-2-naphthoate from chorismate: step 2/7. Its pathway is cofactor biosynthesis; phylloquinone biosynthesis. Functionally, catalyzes the thiamine diphosphate-dependent decarboxylation of 2-oxoglutarate and the subsequent addition of the resulting succinic semialdehyde-thiamine pyrophosphate anion to isochorismate to yield 2-succinyl-5-enolpyruvyl-6-hydroxy-3-cyclohexene-1-carboxylate (SEPHCHC). This Prochlorococcus marinus (strain MIT 9312) protein is 2-succinyl-5-enolpyruvyl-6-hydroxy-3-cyclohexene-1-carboxylate synthase.